Reading from the N-terminus, the 337-residue chain is Transaldolase (337 aa).

Residues 1-10 (MSGSPVKRQR) carry the Nuclear localization signal motif. The residue at position 115 (Lys115) is an N6-acetyllysine. Lys142 serves as the catalytic Schiff-base intermediate with substrate. Lys219 carries the N6-acetyllysine modification. Ser237 and Ser256 each carry phosphoserine. N6-acetyllysine is present on residues Lys269, Lys286, and Lys321.

The protein belongs to the transaldolase family. Type 1 subfamily. As to quaternary structure, homodimer. Interacts with KPNA1 and KPNA4.

Its subcellular location is the nucleus. The protein resides in the cytoplasm. The enzyme catalyses D-sedoheptulose 7-phosphate + D-glyceraldehyde 3-phosphate = D-erythrose 4-phosphate + beta-D-fructose 6-phosphate. The protein operates within carbohydrate degradation; pentose phosphate pathway; D-glyceraldehyde 3-phosphate and beta-D-fructose 6-phosphate from D-ribose 5-phosphate and D-xylulose 5-phosphate (non-oxidative stage): step 2/3. In terms of biological role, catalyzes the rate-limiting step of the non-oxidative phase in the pentose phosphate pathway. Catalyzes the reversible conversion of sedheptulose-7-phosphate and D-glyceraldehyde 3-phosphate into erythrose-4-phosphate and beta-D-fructose 6-phosphate. This chain is Transaldolase (TALDO1), found in Cricetulus griseus (Chinese hamster).